The following is a 563-amino-acid chain: Methylcrotonoyl-CoA carboxylase beta chain, mitochondrial (563 aa).

The transit peptide at 1 to 22 directs the protein to the mitochondrion; sequence MWAVLRLALRPCARASPAGPRA. In terms of domain architecture, CoA carboxyltransferase N-terminal spans 49 to 306; the sequence is MKALVNQLHE…QKKLDVTIEP (258 aa). The interval 49–555 is carboxyltransferase; it reads MKALVNQLHE…SAALNAPIEK (507 aa). Lysine 70 carries the post-translational modification N6-acetyllysine; alternate. The residue at position 70 (lysine 70) is an N6-succinyllysine; alternate. Lysine 141 is subject to N6-succinyllysine. The CoA carboxyltransferase C-terminal domain occupies 309–555; the sequence is EPLFPADELY…SAALNAPIEK (247 aa). Residues 343–372 form an acyl-CoA binding region; that stretch reads RFTEFKAFYGDTLVTGFARIFGYPVGIVGN. An N6-acetyllysine; alternate modification is found at lysine 495. At lysine 495 the chain carries N6-succinyllysine; alternate. An N6-acetyllysine modification is found at lysine 511.

Belongs to the AccD/PCCB family. As to quaternary structure, probably a dodecamer composed of six biotin-containing alpha subunits (MCCC1) and six beta (MCCC2) subunits.

The protein localises to the mitochondrion matrix. It carries out the reaction 3-methylbut-2-enoyl-CoA + hydrogencarbonate + ATP = 3-methyl-(2E)-glutaconyl-CoA + ADP + phosphate + H(+). Its pathway is amino-acid degradation; L-leucine degradation; (S)-3-hydroxy-3-methylglutaryl-CoA from 3-isovaleryl-CoA: step 2/3. In terms of biological role, carboxyltransferase subunit of the 3-methylcrotonyl-CoA carboxylase, an enzyme that catalyzes the conversion of 3-methylcrotonyl-CoA to 3-methylglutaconyl-CoA, a critical step for leucine and isovaleric acid catabolism. This Homo sapiens (Human) protein is Methylcrotonoyl-CoA carboxylase beta chain, mitochondrial (MCCC2).